Consider the following 349-residue polypeptide: Isopentenyl-diphosphate delta-isomerase (349 aa).

Position 6–7 (6–7) interacts with substrate; the sequence is RK. FMN-binding positions include 62-64, serine 93, and asparagine 122; that span reads AMT. Glutamine 152 lines the substrate pocket. Glutamate 153 is a binding site for Mg(2+). Residues lysine 184, threonine 214, 258-259, and 280-281 each bind FMN; these read GG and AG.

Belongs to the IPP isomerase type 2 family. Homooctamer. Dimer of tetramers. FMN serves as cofactor. It depends on NADPH as a cofactor. The cofactor is Mg(2+).

It localises to the cytoplasm. The enzyme catalyses isopentenyl diphosphate = dimethylallyl diphosphate. In terms of biological role, involved in the biosynthesis of isoprenoids. Catalyzes the 1,3-allylic rearrangement of the homoallylic substrate isopentenyl (IPP) to its allylic isomer, dimethylallyl diphosphate (DMAPP). The polypeptide is Isopentenyl-diphosphate delta-isomerase (Bacillus thuringiensis subsp. konkukian (strain 97-27)).